A 316-amino-acid polypeptide reads, in one-letter code: tRNA-cytidine(32) 2-sulfurtransferase (316 aa).

Residues 52–57 carry the PP-loop motif motif; it reads SGGKDS. Cys-127, Cys-130, and Cys-218 together coordinate [4Fe-4S] cluster.

It belongs to the TtcA family. In terms of assembly, homodimer. Requires Mg(2+) as cofactor. The cofactor is [4Fe-4S] cluster.

Its subcellular location is the cytoplasm. The catalysed reaction is cytidine(32) in tRNA + S-sulfanyl-L-cysteinyl-[cysteine desulfurase] + AH2 + ATP = 2-thiocytidine(32) in tRNA + L-cysteinyl-[cysteine desulfurase] + A + AMP + diphosphate + H(+). It functions in the pathway tRNA modification. Its function is as follows. Catalyzes the ATP-dependent 2-thiolation of cytidine in position 32 of tRNA, to form 2-thiocytidine (s(2)C32). The sulfur atoms are provided by the cysteine/cysteine desulfurase (IscS) system. The sequence is that of tRNA-cytidine(32) 2-sulfurtransferase from Haemophilus ducreyi (strain 35000HP / ATCC 700724).